Here is a 61-residue protein sequence, read N- to C-terminus: UPF0434 protein Pput_3813 (61 aa).

The protein belongs to the UPF0434 family.

This chain is UPF0434 protein Pput_3813, found in Pseudomonas putida (strain ATCC 700007 / DSM 6899 / JCM 31910 / BCRC 17059 / LMG 24140 / F1).